The chain runs to 179 residues: Large ribosomal subunit protein uL5 (179 aa).

This sequence belongs to the universal ribosomal protein uL5 family. As to quaternary structure, part of the 50S ribosomal subunit; part of the 5S rRNA/L5/L18/L25 subcomplex. Contacts the 5S rRNA and the P site tRNA. Forms a bridge to the 30S subunit in the 70S ribosome.

Functionally, this is one of the proteins that bind and probably mediate the attachment of the 5S RNA into the large ribosomal subunit, where it forms part of the central protuberance. In the 70S ribosome it contacts protein S13 of the 30S subunit (bridge B1b), connecting the 2 subunits; this bridge is implicated in subunit movement. Contacts the P site tRNA; the 5S rRNA and some of its associated proteins might help stabilize positioning of ribosome-bound tRNAs. In Burkholderia cenocepacia (strain HI2424), this protein is Large ribosomal subunit protein uL5.